Here is a 1393-residue protein sequence, read N- to C-terminus: ABC transporter G family member 3 (1393 aa).

The segment covering 1–14 (MEDKNNIELQEKAP) has biased composition (basic and acidic residues). Residues 1-68 (MEDKNNIELQ…IIYQNPTPAS (68 aa)) are disordered. A compositionally biased stretch (low complexity) spans 15–50 (DNYNNNNNNNNNNNNNNNNNNNNNNNNNNNNNNDIN). In terms of domain architecture, ABC transporter 1 spans 100–353 (VSANNISYYI…YFSSIGLAPL (254 aa)). Residue 144 to 151 (GIPGAGKS) participates in ATP binding. Residues 473-698 (MQYAVRFFQA…SYADGGYQGN (226 aa)) form the ABC transmembrane type-2 1 domain. 7 consecutive transmembrane segments (helical) span residues 479 to 499 (FFQA…MGFT), 509 to 529 (LVYF…EEFF), 558 to 578 (IPIS…IAGF), 585 to 605 (FIVF…IFQV), 615 to 635 (LASL…GYMI), 640 to 660 (IPGW…IDMV), and 724 to 744 (VDIV…FLGV). The 253-residue stretch at 783–1035 (MTFQNLNYVV…VIQHFTSAGY (253 aa)) folds into the ABC transporter 2 domain. An ATP-binding site is contributed by 828–835 (GPSGAGKS). The region spanning 1121–1388 (QTILLRFLRS…FLGYLALRFI (268 aa)) is the ABC transmembrane type-2 2 domain. 6 consecutive transmembrane segments (helical) span residues 1122-1142 (TILL…TLFL), 1157-1177 (LVFL…PTIV), 1206-1226 (LPMM…LTGL), 1235-1255 (FFFS…LATL), 1265-1285 (IAIL…GFFI), and 1364-1384 (FYNL…GYLA).

This sequence belongs to the ABC transporter superfamily. ABCG family. PDR (TC 3.A.1.205) subfamily.

The protein localises to the membrane. The chain is ABC transporter G family member 3 (abcG3) from Dictyostelium discoideum (Social amoeba).